The chain runs to 262 residues: tRNA (guanine-N(1)-)-methyltransferase (262 aa).

S-adenosyl-L-methionine-binding positions include Gly113 and 137–142; that span reads IGDYVL.

It belongs to the RNA methyltransferase TrmD family. In terms of assembly, homodimer.

The protein localises to the cytoplasm. The enzyme catalyses guanosine(37) in tRNA + S-adenosyl-L-methionine = N(1)-methylguanosine(37) in tRNA + S-adenosyl-L-homocysteine + H(+). Specifically methylates guanosine-37 in various tRNAs. This is tRNA (guanine-N(1)-)-methyltransferase from Saccharopolyspora erythraea (strain ATCC 11635 / DSM 40517 / JCM 4748 / NBRC 13426 / NCIMB 8594 / NRRL 2338).